A 317-amino-acid chain; its full sequence is MNEWTPIWVNLILILAVLFAFAAMLSWIERRLLGLWQDRYGPNRVGPFGVLQIVADSIKLLTKEDWIPPFADRAVFVLAPAIVAVTTLLAFAVVPIAPGIGVVDLNIGVLFFLAMSSLGVYSIVLGGWASNSKYPLLGGLRAAAQMLSYEVFMGLALMGVVMLAGSFNLRDIVAAQENLWFCIPQILGLATFAVAGIAEARRLPFDLPESENELVAGFHTEYSSMKFGLFFIGEYVGITLISAMIVTLFFGGWLGPVLPPLAWFLLKTFIVIICFVLLRAALPRPRYDQLMTYGWKVMLPVTLVNLLLTGAVVLSVA.

Helical transmembrane passes span I7–W27, A74–V94, I107–G127, L147–F167, L179–E199, F230–F250, V257–L277, and V297–A317.

Belongs to the complex I subunit 1 family. As to quaternary structure, NDH-1 is composed of 14 different subunits. Subunits NuoA, H, J, K, L, M, N constitute the membrane sector of the complex.

It localises to the cell inner membrane. The catalysed reaction is a quinone + NADH + 5 H(+)(in) = a quinol + NAD(+) + 4 H(+)(out). Functionally, NDH-1 shuttles electrons from NADH, via FMN and iron-sulfur (Fe-S) centers, to quinones in the respiratory chain. The immediate electron acceptor for the enzyme in this species is believed to be ubiquinone. Couples the redox reaction to proton translocation (for every two electrons transferred, four hydrogen ions are translocated across the cytoplasmic membrane), and thus conserves the redox energy in a proton gradient. This subunit may bind ubiquinone. This Nitrosospira multiformis (strain ATCC 25196 / NCIMB 11849 / C 71) protein is NADH-quinone oxidoreductase subunit H 1.